Here is a 288-residue protein sequence, read N- to C-terminus: Aquaporin PIP 1-3 (288 aa).

The interval 1–30 is disordered; that stretch reads MEGKEEDVRLGANRYTERQPIGTAAQGAEE. 2 helical membrane-spanning segments follow: residues 57–77 and 92–114; these read IAEFVATFLFLYISILTVMGV and IAWSFGGMIFALVYCTAGISGGH. Positions 116-118 match the NPA 1 motif; that stretch reads NPA. The next 3 helical transmembrane spans lie at 135-155, 177-197, and 211-231; these read VFYMAMQCLGAICGAGVVKGF, GDGLGAEIVGTFVLVYTVFSA, and ILAPLPIGFAVFLVHLATIPI. An NPA 2 motif is present at residues 237–239; the sequence is NPA. A helical membrane pass occupies residues 259-279; it reads IFWVGPFIGAALAAIYHVVVI.

Belongs to the MIP/aquaporin (TC 1.A.8) family. PIP (TC 1.A.8.11) subfamily. As to expression, expressed in roots and leaves.

The protein resides in the cell membrane. Its function is as follows. Water channel required to facilitate the transport of water across cell membrane. Increases the capacity for root water uptake under water deficit. May play a role in drought avoidance in upland rice. The chain is Aquaporin PIP 1-3 (PIP1-3) from Oryza sativa subsp. japonica (Rice).